Here is a 352-residue protein sequence, read N- to C-terminus: Phosphoribosylformylglycinamidine cyclo-ligase (352 aa).

It belongs to the AIR synthase family.

It is found in the cytoplasm. The enzyme catalyses 2-formamido-N(1)-(5-O-phospho-beta-D-ribosyl)acetamidine + ATP = 5-amino-1-(5-phospho-beta-D-ribosyl)imidazole + ADP + phosphate + H(+). Its pathway is purine metabolism; IMP biosynthesis via de novo pathway; 5-amino-1-(5-phospho-D-ribosyl)imidazole from N(2)-formyl-N(1)-(5-phospho-D-ribosyl)glycinamide: step 2/2. The chain is Phosphoribosylformylglycinamidine cyclo-ligase from Nitrosospira multiformis (strain ATCC 25196 / NCIMB 11849 / C 71).